Here is a 106-residue protein sequence, read N- to C-terminus: UPF0145 protein CKL_2433 (106 aa).

It belongs to the UPF0145 family.

In Clostridium kluyveri (strain ATCC 8527 / DSM 555 / NBRC 12016 / NCIMB 10680 / K1), this protein is UPF0145 protein CKL_2433.